Reading from the N-terminus, the 464-residue chain is MILANAFCLFFFLDETLRSLASPSSPQGSELHGWRPQVDCVRANELCAAESNCSSRYRTLRQCLAGRDRNTMLANKECQAALEVLQESPLYDCRCKRGMKKELQCLQIYWSIHLGLTEGEEFYEASPYEPVTSRLSDIFRLASIFSGTGADPVVSAKSNHCLDAAKACNLNDNCKKLRSSYISICNREISPTERCNRRKCHKALRQFFDRVPSEYTYRMLFCSCQDQACAERRRQTILPSCSYEDKEKPNCLDLRSLCRTDHLCRSRLADFHANCRASYRTITSCPADNYQACLGSYAGMIGFDMTPNYVDSNPTGIVVSPWCNCRGSGNMEEECEKFLKDFTENPCLRNAIQAFGNGTDVNMSPKGPTFSATQAPRVEKTPSLPDDLSDSTSLGTSVITTCTSIQEQGLKANNSKELSMCFTELTTNISPGSKKVIKLYSGSCRARLSTALTALPLLMVTLAQ.

The first 21 residues, 1-21, serve as a signal peptide directing secretion; the sequence is MILANAFCLFFFLDETLRSLA. 14 cysteine pairs are disulfide-bonded: Cys-40–Cys-93, Cys-47–Cys-53, Cys-63–Cys-78, Cys-95–Cys-105, Cys-161–Cys-222, Cys-168–Cys-174, Cys-185–Cys-200, Cys-195–Cys-241, Cys-224–Cys-229, Cys-251–Cys-323, Cys-258–Cys-264, Cys-275–Cys-293, Cys-285–Cys-347, and Cys-325–Cys-335. N-linked (GlcNAc...) asparagine glycosylation is present at Asn-52. Asn-357 is a glycosylation site (N-linked (GlcNAc...) asparagine). The interval 363-392 is disordered; it reads MSPKGPTFSATQAPRVEKTPSLPDDLSDST. Residues 381-392 are compositionally biased toward low complexity; it reads TPSLPDDLSDST. N-linked (GlcNAc...) asparagine glycosylation is present at Asn-413. Ser-443 is lipidated: GPI-anchor amidated serine. The propeptide at 444 to 464 is removed in mature form; sequence CRARLSTALTALPLLMVTLAQ.

This sequence belongs to the GDNFR family. As to quaternary structure, interacts with NRTN ligand and RET: forms a 2:2:2 ternary complex composed of NRTN ligand, GFRA2 and RET receptor. Also forms a 4:4:4 tetrameric complex composed of 4 copies of NRTN ligand, GFRA2 and RET receptor, which prevents endocytosis of RET. Interacts with SORL1. Neurons of the superior cervical and dorsal root ganglia, and adult brain and testis. Low level in the substantia nigra, spleen and adrenal gland. Isoform 1, isoform 2 and isoform 3 are all expressed in brain, liver, ileum, spleen, heart and kidney. In brain, isoform 1 is most abundant, isoform 2 slightly less and isoform 3 is lowest. No significant levels of isoform 1, isoform 2 or isoform 3 expression in testis.

It localises to the cell membrane. Its function is as follows. Receptor for neurturin (NRTN), a growth factor that supports the survival of sympathetic neurons. NRTN-binding leads to autophosphorylation and activation of the RET receptor. Also able to mediate GDNF signaling through the RET tyrosine kinase receptor. Functionally, participates in NRTN-induced 'Ser-727' phosphorylation of STAT3. This chain is GDNF family receptor alpha-2, found in Mus musculus (Mouse).